A 95-amino-acid chain; its full sequence is Signal recognition particle 19 kDa protein (95 aa).

Belongs to the SRP19 family. In terms of assembly, part of the signal recognition particle protein translocation system, which is composed of SRP and FtsY. Archaeal SRP consists of a 7S RNA molecule of 300 nucleotides and two protein subunits: SRP54 and SRP19.

It localises to the cytoplasm. Its function is as follows. Involved in targeting and insertion of nascent membrane proteins into the cytoplasmic membrane. Binds directly to 7S RNA and mediates binding of the 54 kDa subunit of the SRP. The sequence is that of Signal recognition particle 19 kDa protein from Methanococcoides burtonii (strain DSM 6242 / NBRC 107633 / OCM 468 / ACE-M).